Reading from the N-terminus, the 508-residue chain is Gasdermin-C (508 aa).

A triggers pyroptosis region spans residues 1-257 (MPSMLERISK…VGYCAARSEG (257 aa)).

Belongs to the gasdermin family. As to quaternary structure, homooligomer; homooligomeric ring-shaped pore complex containing 27-28 subunits when inserted in the membrane. Cleavage by CASP8 relieves autoinhibition by releasing the N-terminal moiety (Gasdermin-C, N-terminal) that initiates pyroptosis. The cleavage site is unclear. According to a publication, it takes place after Asp-240 in response to alpha-ketoglutarate. Another paper reports cleavage by CASP8 after Asp-365. Post-translationally, palmitoylated. Expressed mainly in trachea and spleen. In the esophagus, expressed in differentiating cells and probably in differentiated cells. Also detected in gastric epithelium.

It is found in the cytoplasm. The protein localises to the cytosol. The protein resides in the cell membrane. With respect to regulation, the full-length protein before cleavage is inactive: intramolecular interactions between N- and C-terminal domains mediate autoinhibition in the absence of activation signal. The intrinsic pyroptosis-inducing activity is carried by the released N-terminal moiety (Gasdermin-C, N-terminal) following cleavage by caspase CASP8. Functionally, this form constitutes the precursor of the pore-forming protein: upon cleavage, the released N-terminal moiety (Gasdermin-C, N-terminal) binds to membranes and forms pores, triggering pyroptosis. In terms of biological role, pore-forming protein that causes membrane permeabilization and pyroptosis. Produced by the cleavage of gasdermin-C by caspase CASP8 in response to death signals. After cleavage, moves to the plasma membrane where it strongly binds to membrane inner leaflet lipids. Homooligomerizes within the membrane and forms pores of 10-15 nanometers (nm) of inner diameter, triggering pyroptosis. This chain is Gasdermin-C, found in Homo sapiens (Human).